Here is a 520-residue protein sequence, read N- to C-terminus: Leucine aminopeptidase 1 (520 aa).

The Mn(2+) site is built by K288 and D293. The active site involves K300. Mn(2+) is bound by residues D313, D373, and E375. Residue R377 is part of the active site.

The protein belongs to the peptidase M17 family. Homohexamer (dimer of homotrimers). The cofactor is Mn(2+).

The protein localises to the cytoplasm. It catalyses the reaction Release of an N-terminal amino acid, Xaa-|-Yaa-, in which Xaa is preferably Leu, but may be other amino acids including Pro although not Arg or Lys, and Yaa may be Pro. Amino acid amides and methyl esters are also readily hydrolyzed, but rates on arylamides are exceedingly low.. The enzyme catalyses Release of N-terminal proline from a peptide.. Its function is as follows. Presumably involved in the processing and regular turnover of intracellular proteins. Catalyzes the removal of unsubstituted N-terminal amino acids from various peptides. Possesses leucine aminopeptidase activity against the model substrate leucine-amido methyl coumarin. Possesses Cys-Gly dipeptidase activity. In addition, can cleave Cys-Leu and Leu-Cys dipeptides. In terms of biological role, functions as a molecular chaperone to protect proteins from heat-induced damage. In Arabidopsis thaliana (Mouse-ear cress), this protein is Leucine aminopeptidase 1.